Consider the following 316-residue polypeptide: Acetyl-coenzyme A carboxylase carboxyl transferase subunit alpha (316 aa).

The CoA carboxyltransferase C-terminal domain maps to 36-290 (KLEQKLDSLK…KQFLVEQLHI (255 aa)).

The protein belongs to the AccA family. As to quaternary structure, acetyl-CoA carboxylase is a heterohexamer composed of biotin carboxyl carrier protein (AccB), biotin carboxylase (AccC) and two subunits each of ACCase subunit alpha (AccA) and ACCase subunit beta (AccD).

The protein resides in the cytoplasm. The enzyme catalyses N(6)-carboxybiotinyl-L-lysyl-[protein] + acetyl-CoA = N(6)-biotinyl-L-lysyl-[protein] + malonyl-CoA. It functions in the pathway lipid metabolism; malonyl-CoA biosynthesis; malonyl-CoA from acetyl-CoA: step 1/1. In terms of biological role, component of the acetyl coenzyme A carboxylase (ACC) complex. First, biotin carboxylase catalyzes the carboxylation of biotin on its carrier protein (BCCP) and then the CO(2) group is transferred by the carboxyltransferase to acetyl-CoA to form malonyl-CoA. In Protochlamydia amoebophila (strain UWE25), this protein is Acetyl-coenzyme A carboxylase carboxyl transferase subunit alpha.